An 85-amino-acid polypeptide reads, in one-letter code: Putative membrane protein insertion efficiency factor (85 aa).

The protein belongs to the UPF0161 family.

It is found in the cell membrane. In terms of biological role, could be involved in insertion of integral membrane proteins into the membrane. The chain is Putative membrane protein insertion efficiency factor from Baumannia cicadellinicola subsp. Homalodisca coagulata.